A 396-amino-acid chain; its full sequence is Phosphopentomutase (396 aa).

6 residues coordinate Mn(2+): D14, D286, H291, D327, H328, and H339.

The protein belongs to the phosphopentomutase family. It depends on Mn(2+) as a cofactor.

It localises to the cytoplasm. It catalyses the reaction 2-deoxy-alpha-D-ribose 1-phosphate = 2-deoxy-D-ribose 5-phosphate. The enzyme catalyses alpha-D-ribose 1-phosphate = D-ribose 5-phosphate. It participates in carbohydrate degradation; 2-deoxy-D-ribose 1-phosphate degradation; D-glyceraldehyde 3-phosphate and acetaldehyde from 2-deoxy-alpha-D-ribose 1-phosphate: step 1/2. Its function is as follows. Isomerase that catalyzes the conversion of deoxy-ribose 1-phosphate (dRib-1-P) and ribose 1-phosphate (Rib-1-P) to deoxy-ribose 5-phosphate (dRib-5-P) and ribose 5-phosphate (Rib-5-P), respectively. This Staphylococcus carnosus (strain TM300) protein is Phosphopentomutase.